Reading from the N-terminus, the 342-residue chain is Ribosomal RNA small subunit methyltransferase C (342 aa).

The protein belongs to the methyltransferase superfamily. RsmC family. Monomer.

It localises to the cytoplasm. The catalysed reaction is guanosine(1207) in 16S rRNA + S-adenosyl-L-methionine = N(2)-methylguanosine(1207) in 16S rRNA + S-adenosyl-L-homocysteine + H(+). Functionally, specifically methylates the guanine in position 1207 of 16S rRNA in the 30S particle. The polypeptide is Ribosomal RNA small subunit methyltransferase C (Salmonella agona (strain SL483)).